The sequence spans 633 residues: DEAD-box ATP-dependent RNA helicase 27 (633 aa).

Over residues 1-17 (MANLDMEQHSSENEEIK) the composition is skewed to basic and acidic residues. The disordered stretch occupies residues 1–147 (MANLDMEQHS…DKEEEKKLEE (147 aa)). Residues 2 to 34 (ANLDMEQHSSENEEIKKKKHKKRARDEAKKLKQ) are a coiled coil. 2 stretches are compositionally biased toward acidic residues: residues 37–47 (MEEEPDHEDGD) and 74–83 (DDGEDEAVAE). Residues 88 to 97 (KKKKKNKKLQ) are compositionally biased toward basic residues. Composition is skewed to acidic residues over residues 103–114 (NDEEDEVIAEEE) and 131–140 (SEEEEVEDKE). The stretch at 117-153 (KKKKKKQRKDTEAKSEEEEVEDKEEEKKLEETSIMTN) forms a coiled coil. Positions 154–182 (KTFESLSLSDNTYKSIKEMGFARMTQIQA) match the Q motif motif. One can recognise a Helicase ATP-binding domain in the interval 185–360 (IPPLMMGEDV…RVSLTSPVYI (176 aa)). 198–205 (ARTGSGKT) lines the ATP pocket. A DEAD box motif is present at residues 308–311 (DEAD). The region spanning 386 to 534 (RLLFLLTFLK…EHEFEEKKLL (149 aa)) is the Helicase C-terminal domain. The interval 608–633 (KREPVNKFKRGRGGGRPGGKSKFERY) is disordered.

This sequence belongs to the DEAD box helicase family. DDX18/HAS1 subfamily.

The catalysed reaction is ATP + H2O = ADP + phosphate + H(+). The polypeptide is DEAD-box ATP-dependent RNA helicase 27 (RH27) (Arabidopsis thaliana (Mouse-ear cress)).